The chain runs to 324 residues: uncharacterized protein (324 aa).

This is an uncharacterized protein from Homo sapiens (Human).